The chain runs to 374 residues: Queuine tRNA-ribosyltransferase (374 aa).

The Proton acceptor role is filled by Asp89. Residues 89-93 (DSGGF), Asp143, Gln187, and Gly214 each bind substrate. Positions 245–251 (GVGKPED) are RNA binding. Asp264 acts as the Nucleophile in catalysis. Positions 269–273 (TRNAR) are RNA binding; important for wobble base 34 recognition. The Zn(2+) site is built by Cys302, Cys304, Cys307, and His333.

It belongs to the queuine tRNA-ribosyltransferase family. As to quaternary structure, homodimer. Within each dimer, one monomer is responsible for RNA recognition and catalysis, while the other monomer binds to the replacement base PreQ1. It depends on Zn(2+) as a cofactor.

It carries out the reaction 7-aminomethyl-7-carbaguanine + guanosine(34) in tRNA = 7-aminomethyl-7-carbaguanosine(34) in tRNA + guanine. It participates in tRNA modification; tRNA-queuosine biosynthesis. In terms of biological role, catalyzes the base-exchange of a guanine (G) residue with the queuine precursor 7-aminomethyl-7-deazaguanine (PreQ1) at position 34 (anticodon wobble position) in tRNAs with GU(N) anticodons (tRNA-Asp, -Asn, -His and -Tyr). Catalysis occurs through a double-displacement mechanism. The nucleophile active site attacks the C1' of nucleotide 34 to detach the guanine base from the RNA, forming a covalent enzyme-RNA intermediate. The proton acceptor active site deprotonates the incoming PreQ1, allowing a nucleophilic attack on the C1' of the ribose to form the product. After dissociation, two additional enzymatic reactions on the tRNA convert PreQ1 to queuine (Q), resulting in the hypermodified nucleoside queuosine (7-(((4,5-cis-dihydroxy-2-cyclopenten-1-yl)amino)methyl)-7-deazaguanosine). This chain is Queuine tRNA-ribosyltransferase, found in Shewanella frigidimarina (strain NCIMB 400).